The primary structure comprises 476 residues: Protein DETOXIFICATION 4 (476 aa).

12 helical membrane passes run 35–55 (AVPM…SVMV), 66–86 (GVAL…FGLV), 117–137 (IPIC…LISL), 154–174 (LIPT…LLAQ), 176–196 (LVLP…AVCW), 208–228 (GAAL…SCYV), 260–280 (AAML…SGLL), 289–309 (VLSI…GVAA), 332–352 (LAGL…LFAF), 370–390 (VADL…TAVL), 408–428 (VVAY…SCEL), and 433–453 (LWCG…IVTA).

Belongs to the multi antimicrobial extrusion (MATE) (TC 2.A.66.1) family.

It is found in the membrane. The chain is Protein DETOXIFICATION 4 from Arabidopsis thaliana (Mouse-ear cress).